The chain runs to 419 residues: MAPK/MAK/MRK overlapping kinase (419 aa).

Residues 4 to 285 (YKAIGKIGEG…AHQALQHPYF (282 aa)) enclose the Protein kinase domain. ATP is bound by residues 10-18 (IGEGTFSEV) and lysine 33. The active-site Proton acceptor is the aspartate 128. 2 disordered regions span residues 285-344 (FQEQ…RGPA) and 390-419 (PASKKTDPQKDLKPAPQQCRLPTIVRKGGR). 2 stretches are compositionally biased toward basic and acidic residues: residues 322 to 338 (KEGRKQKQSLKQEEDRP) and 393 to 402 (KKTDPQKDLK).

It belongs to the protein kinase superfamily. CMGC Ser/Thr protein kinase family. CDC2/CDKX subfamily. It depends on Mg(2+) as a cofactor. In terms of processing, autophosphorylated. In terms of tissue distribution, expressed in heart, brain, lung, kidney, and pancreas, and at very low levels in placenta, liver and skeletal muscle. Detected in retina.

It is found in the cytoplasm. The protein localises to the cell projection. Its subcellular location is the cilium. It localises to the nucleus. It catalyses the reaction L-seryl-[protein] + ATP = O-phospho-L-seryl-[protein] + ADP + H(+). The enzyme catalyses L-threonyl-[protein] + ATP = O-phospho-L-threonyl-[protein] + ADP + H(+). With respect to regulation, phosphorylation appears to increase the enzymatic activity. In terms of biological role, able to phosphorylate several exogenous substrates and to undergo autophosphorylation. Negatively regulates cilium length in a cAMP and mTORC1 signaling-dependent manner. The chain is MAPK/MAK/MRK overlapping kinase (MOK) from Homo sapiens (Human).